Consider the following 68-residue polypeptide: Palustrin-1c (68 aa).

Residues 1–22 form the signal peptide; that stretch reads MFTMKKSLLLLFFLGTISLSLC. A propeptide spanning residues 23–39 is cleaved from the precursor; the sequence is EEERGADEEEGDGEKLT. Cysteines 62 and 68 form a disulfide.

Expressed by the skin glands.

It localises to the secreted. In terms of biological role, antimicrobial peptide. This is Palustrin-1c from Odorrana versabilis (Chinese bamboo leaf odorous frog).